The primary structure comprises 513 residues: cAMP-regulated M3R protein (513 aa).

It to D.discoideum protein M3L.

The polypeptide is cAMP-regulated M3R protein (prtB) (Dictyostelium discoideum (Social amoeba)).